The primary structure comprises 189 residues: UPF0301 protein PST_3956 (189 aa).

This sequence belongs to the UPF0301 (AlgH) family.

The polypeptide is UPF0301 protein PST_3956 (Stutzerimonas stutzeri (strain A1501) (Pseudomonas stutzeri)).